The following is a 447-amino-acid chain: Adenylosuccinate synthetase (447 aa).

GTP contacts are provided by residues 35-41 (GDEGKGK) and 63-65 (GHT). Asp-36 functions as the Proton acceptor in the catalytic mechanism. Mg(2+) is bound by residues Asp-36 and Gly-63. IMP-binding positions include 36–39 (DEGK), 61–64 (NAGH), Thr-153, Arg-167, Asn-245, Thr-260, and Arg-324. Residue His-64 is the Proton donor of the active site. 320 to 326 (VTTKRKR) is a binding site for substrate. Residues Arg-326, 352–354 (KLD), and 435–437 (GVG) each bind GTP.

Belongs to the adenylosuccinate synthetase family. As to quaternary structure, homodimer. Mg(2+) is required as a cofactor.

The protein localises to the cytoplasm. The catalysed reaction is IMP + L-aspartate + GTP = N(6)-(1,2-dicarboxyethyl)-AMP + GDP + phosphate + 2 H(+). Its pathway is purine metabolism; AMP biosynthesis via de novo pathway; AMP from IMP: step 1/2. Plays an important role in the de novo pathway and in the salvage pathway of purine nucleotide biosynthesis. Catalyzes the first committed step in the biosynthesis of AMP from IMP. This Drosophila sechellia (Fruit fly) protein is Adenylosuccinate synthetase.